Consider the following 308-residue polypeptide: Oxygen-dependent coproporphyrinogen-III oxidase (308 aa).

Serine 97 contributes to the substrate binding site. Positions 101 and 111 each coordinate a divalent metal cation. The active-site Proton donor is histidine 111. 113 to 115 (NVR) contacts substrate. Histidine 153 and histidine 183 together coordinate a divalent metal cation. An important for dimerization region spans residues 248-283 (YVEFNLVWDRGTHFGLQSGGRTESILMSMPPLASWS). 266–268 (GGR) provides a ligand contact to substrate.

Belongs to the aerobic coproporphyrinogen-III oxidase family. Homodimer. A divalent metal cation is required as a cofactor.

The protein resides in the cytoplasm. It carries out the reaction coproporphyrinogen III + O2 + 2 H(+) = protoporphyrinogen IX + 2 CO2 + 2 H2O. It participates in porphyrin-containing compound metabolism; protoporphyrin-IX biosynthesis; protoporphyrinogen-IX from coproporphyrinogen-III (O2 route): step 1/1. Its function is as follows. Involved in the heme biosynthesis. Catalyzes the aerobic oxidative decarboxylation of propionate groups of rings A and B of coproporphyrinogen-III to yield the vinyl groups in protoporphyrinogen-IX. The protein is Oxygen-dependent coproporphyrinogen-III oxidase of Polaromonas sp. (strain JS666 / ATCC BAA-500).